Here is a 90-residue protein sequence, read N- to C-terminus: Small ribosomal subunit protein uS15c (90 aa).

The protein belongs to the universal ribosomal protein uS15 family. In terms of assembly, part of the 30S ribosomal subunit.

It is found in the plastid. The protein resides in the chloroplast. The protein is Small ribosomal subunit protein uS15c (rps15-A) of Zea mays (Maize).